A 123-amino-acid polypeptide reads, in one-letter code: MAITKEDILEAVAGLTVMELNDLVKAFEEKFGVSAAAVAVAGPAGAGAAAAEEKTEFDVVLSAAGDNKVGVIKVVRAITGLGLKEAKDLVDGAPKNVKEGVAKAEAEDIVKQLTEAGAKAEIK.

This sequence belongs to the bacterial ribosomal protein bL12 family. Homodimer. Part of the ribosomal stalk of the 50S ribosomal subunit. Forms a multimeric L10(L12)X complex, where L10 forms an elongated spine to which 2 to 4 L12 dimers bind in a sequential fashion. Binds GTP-bound translation factors.

Forms part of the ribosomal stalk which helps the ribosome interact with GTP-bound translation factors. Is thus essential for accurate translation. The polypeptide is Large ribosomal subunit protein bL12 (Chromobacterium violaceum (strain ATCC 12472 / DSM 30191 / JCM 1249 / CCUG 213 / NBRC 12614 / NCIMB 9131 / NCTC 9757 / MK)).